We begin with the raw amino-acid sequence, 510 residues long: Probable RNA-binding protein 46 (510 aa).

The disordered stretch occupies residues 23-42 (ENGQRKFGGPPPGWEGPPPP). Over residues 31–42 (GPPPGWEGPPPP) the composition is skewed to pro residues. 3 consecutive RRM domains span residues 45-123 (REVF…VSLD), 125-207 (CRLF…WAEP), and 220-292 (RVLY…LAKP).

In terms of tissue distribution, expressed in the testis and ovary.

Its subcellular location is the cytoplasm. In terms of biological role, essential for male and female fertility, playing a crucial role in regulating germ cell development by ensuring the proper progression of meiosis prophase I. The chain is Probable RNA-binding protein 46 (rbm46) from Danio rerio (Zebrafish).